The chain runs to 163 residues: uncharacterized protein (163 aa).

The helical transmembrane segment at L11–L31 threads the bilayer.

Its subcellular location is the membrane. This is an uncharacterized protein from Saccharomyces cerevisiae (strain ATCC 204508 / S288c) (Baker's yeast).